The chain runs to 493 residues: Reticulophagy regulator 1 (493 aa).

The segment at 1-52 (MASPAPPEPAEQGSPALAAAPQAPPPPTRAPPEEPEGAAPPEEGAAAGAGRQ) is disordered. Residues 1 to 55 (MASPAPPEPAEQGSPALAAAPQAPPPPTRAPPEEPEGAAPPEEGAAAGAGRQVEE) lie on the Cytoplasmic side of the membrane. Low complexity predominate over residues 37 to 52 (GAAPPEEGAAAGAGRQ). Residues 56–76 (AAGGVAAVVTWLLGEPALWLG) form a helical membrane-spanning segment. The Lumenal segment spans residues 77 to 87 (GRADELLSWKR). A reticulon homology domain region spans residues 80–229 (DELLSWKRPL…LLCAFLCPLF (150 aa)). A helical transmembrane segment spans residues 88–108 (PLHSLLAFVGANLVFWFLALT). Over 109 to 114 (PWRVYH) the chain is Cytoplasmic. A helical membrane pass occupies residues 115 to 135 (LISVMILTRVIMQIIKDMILS). Residues 136–204 (RTRGAQLWRS…LVCSVCTFFT (69 aa)) are Lumenal-facing. Position 145 is a phosphoserine (Ser145). Ser147 carries the phosphoserine; by CAMK2B modification. Residue Ser149 is modified to Phosphoserine. The helical transmembrane segment at 205-225 (ILGSYIPGVILSYLLLLCAFL) threads the bilayer. Topologically, residues 226 to 493 (CPLFKCNDIG…GFLSNLLGGH (268 aa)) are cytoplasmic. The span at 315–326 (FNLSEGYTPQTD) shows a compositional bias: polar residues. Disordered stretches follow at residues 315–394 (FNLS…GLSL) and 435–493 (AAPS…LGGH). Positions 330–344 (DLDRPSEEVFSRDLS) are enriched in basic and acidic residues. Thr353 is subject to Phosphothreonine. The segment covering 368–388 (ELKRKKEQLDGGPRRSTEKKS) has biased composition (basic and acidic residues). Residues 441–463 (EDTDTEEGDDFELLDQSELDQIE) are compositionally biased toward acidic residues. The LIR motif motif lies at 449-454 (DDFELL). Over residues 467–486 (GLSQDQEAEAQQNKKSSGFL) the composition is skewed to polar residues.

Belongs to the RETREG family. Homooligomer; oligomerization is enhanced following endoplasmic reticulum stress and is mediated by the reticulon homology domain. Interacts with ATG8 family modifier proteins MAP1LC3A, MAP1LC3B, GABARAP, GABARAPL1 and GABARAPL2. Post-translationally, phosphorylation at Ser-147 by CAMK2B enhances oligomerization and membrane scission and reticulophagy activity.

The protein localises to the golgi apparatus. Its subcellular location is the cis-Golgi network membrane. It localises to the endoplasmic reticulum membrane. Endoplasmic reticulum (ER)-anchored autophagy regulator which mediates ER delivery into lysosomes through sequestration into autophagosomes. Promotes membrane remodeling and ER scission via its membrane bending capacity and targets the fragments into autophagosomes via interaction with ATG8 family proteins. Active under basal conditions. Required for collagen quality control in a LIR motif-dependent manner. Required for long-term survival of nociceptive and autonomic ganglion neurons. The sequence is that of Reticulophagy regulator 1 (RETREG1) from Bos taurus (Bovine).